The following is an 86-amino-acid chain: Apolipoprotein C-I (86 aa).

The signal sequence occupies residues 1-26 (MRLFLSLPVLVVALLMILEGPGPAQG).

The protein belongs to the apolipoprotein C1 family.

The protein localises to the secreted. Inhibitor of lipoprotein binding to the low density lipoprotein (LDL) receptor, LDL receptor-related protein, and very low density lipoprotein (VLDL) receptor. Associates with high density lipoproteins (HDL) and the triacylglycerol-rich lipoproteins in the plasma and makes up about 10% of the protein of the VLDL and 2% of that of HDL. Appears to interfere directly with fatty acid uptake and is also the major plasma inhibitor of cholesteryl ester transfer protein (CETP). Binds free fatty acids and reduces their intracellular esterification. Modulates the interaction of APOE with beta-migrating VLDL and inhibits binding of beta-VLDL to the LDL receptor-related protein. The protein is Apolipoprotein C-I (APOC1) of Aotus nancymaae (Ma's night monkey).